We begin with the raw amino-acid sequence, 848 residues long: Trimethylamine-N-oxide reductase 1 (848 aa).

Positions 1 to 39 (MNNNDLFQASRRRFLAQLGGLTVAGMLGPSLLTSRRATA) form a signal peptide, tat-type signal. S191 serves as a coordination point for Mo-bis(molybdopterin guanine dinucleotide).

The protein belongs to the prokaryotic molybdopterin-containing oxidoreductase family. In terms of assembly, interacts with the N-terminal domain of TorC. Requires Mo-bis(molybdopterin guanine dinucleotide) as cofactor. In terms of processing, predicted to be exported by the Tat system. The position of the signal peptide cleavage has not been experimentally proven.

The protein localises to the periplasm. The catalysed reaction is trimethylamine + 2 Fe(III)-[cytochrome c] + H2O = trimethylamine N-oxide + 2 Fe(II)-[cytochrome c] + 3 H(+). Functionally, reduces trimethylamine-N-oxide (TMAO) into trimethylamine; an anaerobic reaction coupled to energy-yielding reactions. The chain is Trimethylamine-N-oxide reductase 1 (torA) from Escherichia coli O157:H7.